We begin with the raw amino-acid sequence, 264 residues long: Matrilysin (264 aa).

Positions 1 to 17 (MQLTLFCFVCLLPGHLA) are cleaved as a signal peptide. Positions 18–94 (LPLSQEAGDV…PRCGVPDVAE (77 aa)) are cleaved as a propeptide — activation peptide. The Cysteine switch signature appears at 85-92 (PRCGVPDV). Residue Cys87 participates in Zn(2+) binding. Residue Asp153 coordinates Ca(2+). Residues His163 and Asp165 each coordinate Zn(2+). Residues Asp170, Gly171, Gly173, and Thr175 each contribute to the Ca(2+) site. His178 lines the Zn(2+) pocket. The Ca(2+) site is built by Gly185, Gly187, and Asp189. Residue His191 coordinates Zn(2+). Residues Asp193 and Glu196 each coordinate Ca(2+). His214 provides a ligand contact to Zn(2+). Glu215 is an active-site residue. Zn(2+)-binding residues include His218 and His224.

The protein belongs to the peptidase M10A family. Requires Ca(2+) as cofactor. The cofactor is Zn(2+). Expressed in the intestinal epithelium (at protein level).

The protein localises to the secreted. It is found in the extracellular space. Its subcellular location is the extracellular matrix. It catalyses the reaction Cleavage of 14-Ala-|-Leu-15 and 16-Tyr-|-Leu-17 in B chain of insulin. No action on collagen types I, II, IV, V. Cleaves gelatin chain alpha2(I) &gt; alpha1(I).. Its function is as follows. Degrades casein, gelatins of types I, III, IV, and V, and fibronectin. Activates procollagenase. May play a role in tissue reorganization. The chain is Matrilysin (Mmp7) from Mus musculus (Mouse).